A 516-amino-acid chain; its full sequence is Coiled-coil domain-containing protein 149 (516 aa).

The span at 1 to 18 (MANQLRERHQSLKKKYGE) shows a compositional bias: basic and acidic residues. The interval 1 to 29 (MANQLRERHQSLKKKYGELIDGDPSVPPE) is disordered. Coiled coils occupy residues 1–195 (MANQ…ALEK) and 259–286 (IQHQ…LEVS). Basic and acidic residues predominate over residues 321–332 (PHHKPLTNEEHG). Disordered stretches follow at residues 321–350 (PHHK…SDNE) and 406–452 (ETSF…SLGD). A compositionally biased stretch (polar residues) spans 414 to 436 (DSQSTASSQENHDNLQSPFSSPE).

Belongs to the CCDC149 family.

This chain is Coiled-coil domain-containing protein 149 (ccdc149), found in Xenopus laevis (African clawed frog).